The sequence spans 325 residues: Flotillin-like protein FloA (325 aa).

2 consecutive transmembrane segments (helical) span residues 4 to 24 (LGIV…FSFI) and 26 to 46 (VGLW…TLVA).

This sequence belongs to the flotillin-like FloA family. Homooligomerizes.

It is found in the cell membrane. The protein localises to the membrane raft. Its function is as follows. Found in functional membrane microdomains (FMM) that may be equivalent to eukaryotic membrane rafts. FMMs are highly dynamic and increase in number as cells age. Flotillins are thought to be important factors in membrane fluidity. The protein is Flotillin-like protein FloA of Thermus thermophilus (strain ATCC BAA-163 / DSM 7039 / HB27).